Here is a 137-residue protein sequence, read N- to C-terminus: Small ribosomal subunit protein uS12 (137 aa).

The segment at 33–57 is disordered; it reads KVQTNVSSPQKRGVATRVGTMTPKK. A 3-methylthioaspartic acid modification is found at D102.

Belongs to the universal ribosomal protein uS12 family. As to quaternary structure, part of the 30S ribosomal subunit. Contacts proteins S8 and S17. May interact with IF1 in the 30S initiation complex.

Functionally, with S4 and S5 plays an important role in translational accuracy. Interacts with and stabilizes bases of the 16S rRNA that are involved in tRNA selection in the A site and with the mRNA backbone. Located at the interface of the 30S and 50S subunits, it traverses the body of the 30S subunit contacting proteins on the other side and probably holding the rRNA structure together. The combined cluster of proteins S8, S12 and S17 appears to hold together the shoulder and platform of the 30S subunit. This Streptococcus thermophilus (strain CNRZ 1066) protein is Small ribosomal subunit protein uS12.